We begin with the raw amino-acid sequence, 484 residues long: Probable glycine dehydrogenase (decarboxylating) subunit 2 (484 aa).

Lys-264 is modified (N6-(pyridoxal phosphate)lysine).

Belongs to the GcvP family. C-terminal subunit subfamily. In terms of assembly, the glycine cleavage system is composed of four proteins: P, T, L and H. In this organism, the P 'protein' is a heterodimer of two subunits. It depends on pyridoxal 5'-phosphate as a cofactor.

The enzyme catalyses N(6)-[(R)-lipoyl]-L-lysyl-[glycine-cleavage complex H protein] + glycine + H(+) = N(6)-[(R)-S(8)-aminomethyldihydrolipoyl]-L-lysyl-[glycine-cleavage complex H protein] + CO2. Functionally, the glycine cleavage system catalyzes the degradation of glycine. The P protein binds the alpha-amino group of glycine through its pyridoxal phosphate cofactor; CO(2) is released and the remaining methylamine moiety is then transferred to the lipoamide cofactor of the H protein. The chain is Probable glycine dehydrogenase (decarboxylating) subunit 2 from Legionella pneumophila (strain Paris).